Consider the following 591-residue polypeptide: Inactive metallocarboxypeptidase ECM14 (591 aa).

The signal sequence occupies residues 1-21 (MRLFSHLAVLAILACAVPITA). Residues 22-175 (IPSFLSNSYP…QTIYESYPSS (154 aa)) constitute a propeptide that is removed on maturation. The 321-residue stretch at 203 to 523 (DYQPFSVIVP…NAVMVLGRFL (321 aa)) folds into the Peptidase M14 domain. 2 residues coordinate Zn(2+): His265 and Glu268. Residues 265–268 (HARE), Arg323, and 340–341 (DR) each bind substrate. A disulfide bridge connects residues Cys334 and Cys357. 3 N-linked (GlcNAc...) asparagine glycosylation sites follow: Asn350, Asn381, and Asn386. His397 is a Zn(2+) binding site. 398–399 (SY) serves as a coordination point for substrate. The segment at 533 to 591 (DWEDESQRPKADEDDIPSENELDENDDSWIPYDYRNHDDQNEGEGYDNDEWGFRRRRKR) is disordered. 2 stretches are compositionally biased toward acidic residues: residues 544-559 (DEDD…ENDD) and 573-582 (NEGEGYDNDE).

The protein belongs to the peptidase M14 family. Requires Zn(2+) as cofactor.

The protein resides in the vacuole. It localises to the secreted. Functionally, inactive carboxypeptidase that may play a role in cell wall organization and biogenesis. This is Inactive metallocarboxypeptidase ECM14 (ECM14) from Paracoccidioides brasiliensis (strain Pb18).